We begin with the raw amino-acid sequence, 349 residues long: Heat-inducible transcription repressor HrcA (349 aa).

It belongs to the HrcA family.

Negative regulator of class I heat shock genes (grpE-dnaK-dnaJ and groELS operons). Prevents heat-shock induction of these operons. This Xylella fastidiosa (strain 9a5c) protein is Heat-inducible transcription repressor HrcA.